The following is a 418-amino-acid chain: NADH-quinone oxidoreductase subunit D (418 aa).

It belongs to the complex I 49 kDa subunit family. NDH-1 is composed of 14 different subunits. Subunits NuoB, C, D, E, F, and G constitute the peripheral sector of the complex.

It is found in the cell inner membrane. The enzyme catalyses a quinone + NADH + 5 H(+)(in) = a quinol + NAD(+) + 4 H(+)(out). Functionally, NDH-1 shuttles electrons from NADH, via FMN and iron-sulfur (Fe-S) centers, to quinones in the respiratory chain. The immediate electron acceptor for the enzyme in this species is believed to be ubiquinone. Couples the redox reaction to proton translocation (for every two electrons transferred, four hydrogen ions are translocated across the cytoplasmic membrane), and thus conserves the redox energy in a proton gradient. This Bordetella pertussis (strain Tohama I / ATCC BAA-589 / NCTC 13251) protein is NADH-quinone oxidoreductase subunit D.